Consider the following 363-residue polypeptide: Somatostatin receptor type 5 (363 aa).

The Extracellular portion of the chain corresponds to 1-35 (MEPLSLASTPSWNASAASSGNHNWSLVGSASPMGA). N-linked (GlcNAc...) asparagine glycans are attached at residues Asn13 and Asn23. The chain crosses the membrane as a helical span at residues 36 to 63 (RAVLVPVLYLLVCTVGLSGNTLVIYVVL). The Cytoplasmic portion of the chain corresponds to 64-73 (RHAKMKTVTN). Residues 74 to 99 (VYILNLAVADVLFMLGLPFLATQNAV) form a helical membrane-spanning segment. The Extracellular segment spans residues 100 to 111 (VSYWPFGSFLCR). Residues Cys110 and Cys185 are joined by a disulfide bond. Residues 112 to 133 (LVMTLDGINQFTSIFCLMVMSV) traverse the membrane as a helical segment. The Cytoplasmic segment spans residues 134 to 155 (DRYLAVVHPLRSARWRRPRVAK). A helical transmembrane segment spans residues 156–176 (MASAAVWVFSLLMSLPLLVFA). Residues 177–196 (DVQEGWGTCNLSWPEPVGLW) are Extracellular-facing. N-linked (GlcNAc...) asparagine glycosylation occurs at Asn186. Residues 197–221 (GAAFITYTSVLGFFGPLLVICLCYL) traverse the membrane as a helical segment. The Cytoplasmic segment spans residues 222–247 (LIVVKVKAAGMRVGSSRRRRSEPKVT). The helical transmembrane segment at 248-273 (RMVVVVVLVFVGCWLPFFIVNIVNLA) threads the bilayer. Topologically, residues 274-283 (FTLPEEPTSA) are extracellular. A helical membrane pass occupies residues 284 to 308 (GLYFFVVVLSYANSCANPLLYGFLS). At 309-363 (DNFRQSFRKVLCLRRGYGMEDADAIEPRPDKSGRPQATLPTRSCEANGLMQTSRI) the chain is on the cytoplasmic side. Cys320 is lipidated: S-palmitoyl cysteine; by ZDHHC5. Residues 331–363 (DAIEPRPDKSGRPQATLPTRSCEANGLMQTSRI) form a disordered region.

Belongs to the G-protein coupled receptor 1 family. Heterodimer with SSTR2. Heterodimerization with SSTR2 increases cell growth inhibition activity of SSTR2. Post-translationally, palmitoylated at Cys-320 by ZDHHC5, but not ZDHHC8. Palmitoylation creates an additional intracellular loop which is thought to be important for efficient coupling to G-proteins and may target the protein to lipid rafts. As to expression, prominent in the pituitary and small intestine. Low levels in islets and spleen. Not detected in kidney, pancreas, cerebellum, or cortex.

It is found in the cell membrane. In terms of biological role, receptor for somatostatin-28. The activity of this receptor is mediated by G proteins which inhibit adenylyl cyclase. Increases cell growth inhibition activity of SSTR2 following heterodimerization. The chain is Somatostatin receptor type 5 (Sstr5) from Rattus norvegicus (Rat).